The following is a 587-amino-acid chain: Glucosylglycerate phosphorylase (587 aa).

Residue Asp236 is the Nucleophile of the active site.

It belongs to the glycosyl hydrolase 13 family. Glucosylglycerate phosphorylase subfamily.

It catalyses the reaction (2R)-2-O-(alpha-D-glucopyranosyl)-glycerate + phosphate = (R)-glycerate + alpha-D-glucose 1-phosphate. Its function is as follows. Catalyzes the reversible phosphorolysis of glucosylglycerate into alpha-D-glucose 1-phosphate (Glc1P) and D-glycerate. May be a regulator of intracellular levels of glucosylglycerate, a compatible solute that primarily protects organisms facing salt stress and very specific nutritional constraints. Cannot catalyze the phosphorolysis of sucrose. In Spirochaeta thermophila (strain ATCC 700085 / DSM 6578 / Z-1203), this protein is Glucosylglycerate phosphorylase.